A 349-amino-acid chain; its full sequence is tRNA uridine(34) hydroxylase (349 aa).

The Rhodanese domain occupies 146–240 (DDPDAVFIDM…YARRAREQGL (95 aa)). The active-site Cysteine persulfide intermediate is the cysteine 200. Positions 316–328 (EEQRRRRAGRENG) are enriched in basic and acidic residues. The interval 316–349 (EEQRRRRAGRENGNKIFNKSRGRLNTKLGIPDPE) is disordered.

The protein belongs to the TrhO family.

It carries out the reaction uridine(34) in tRNA + AH2 + O2 = 5-hydroxyuridine(34) in tRNA + A + H2O. Catalyzes oxygen-dependent 5-hydroxyuridine (ho5U) modification at position 34 in tRNAs. The protein is tRNA uridine(34) hydroxylase of Enterobacter sp. (strain 638).